The sequence spans 1487 residues: Adhesion G protein-coupled receptor L2 (1487 aa).

A signal peptide spans 1 to 25; sequence MVSSGCRMRSLWFIIIISFSPSTEG. At 26-855 the chain is on the extracellular side; it reads FSRAALPFGL…VHHLLLTVIT (830 aa). The 90-residue stretch at 41–130 folds into the SUEL-type lectin domain; it reads SCEGYSIDLR…KYLEVQYECV (90 aa). Asn99 is a glycosylation site (N-linked (GlcNAc...) asparagine). One can recognise an Olfactomedin-like domain in the interval 139 to 398; that stretch reads VCPGTLKAIV…ILRYSLEFGP (260 aa). Residues 423–439 show a composition bias toward polar residues; the sequence is STTSSASQRGPVSSTAA. Residues 423-461 are disordered; that stretch reads STTSSASQRGPVSSTAAGPQDGSRGTKPPPAVSTTKIPP. 2 N-linked (GlcNAc...) asparagine glycosylation sites follow: Asn524 and Asn735. One can recognise a GAIN-B domain in the interval 663 to 841; sequence TRVSMPTENI…AILMAHREIA (179 aa). 2 disulfide bridges follow: Cys792/Cys823 and Cys811/Cys825. The interval 792 to 841 is GPS; sequence CSFWNYSERTMMGYWSTQGCKLVDTNKTRTTCACSHLTNFAILMAHREIA. The interval 829–841 is stachel; it reads TNFAILMAHREIA. A helical transmembrane segment spans residues 856 to 876; that stretch reads WVGIVVSLVCLAICIFTFCFF. Residues 877–884 lie on the Cytoplasmic side of the membrane; it reads RGLQSDRN. A helical transmembrane segment spans residues 885-905; sequence TIHKNLCINLFIAEFIFLIGI. At 906–911 the chain is on the extracellular side; it reads DKTKYT. Residues 912–932 form a helical membrane-spanning segment; sequence IACPVFAGLLHFFFLAAFSWM. Over 933-955 the chain is Cytoplasmic; the sequence is CLEGVQLYLMLVEVFESEYSRKK. A helical membrane pass occupies residues 956 to 976; sequence YYYVAGYLFPATVVGVSAAID. Over 977 to 994 the chain is Extracellular; it reads YKSYGTVQACWLHVDNYF. Residues 995-1015 traverse the membrane as a helical segment; it reads IWSFIGPVTFIILLNIIFLVI. Topologically, residues 1016–1064 are cytoplasmic; it reads TLCKMVKHSNTLKPDSSRLENINNYRVCDGYYNTDLPGYEDNKPFIKSW. The helical transmembrane segment at 1065–1085 threads the bilayer; it reads VLGAFALLCLLGLTWSFGLLF. Residues 1086–1090 lie on the Extracellular side of the membrane; sequence VNEET. Residues 1091-1111 form a helical membrane-spanning segment; the sequence is VVMAYLFTAFNAFQGLFIFIF. Residues 1386 to 1430 form a disordered region; that stretch reads EADDHLQSPNRDSLYTSMPNLRDSPYPESSPDMAEDLSPSRRSEN. Residues 1392 to 1404 are compositionally biased toward polar residues; the sequence is QSPNRDSLYTSMP. A phosphoserine mark is found at Ser1402, Ser1437, and Ser1458.

The protein belongs to the G-protein coupled receptor 2 family. Adhesion G-protein coupled receptor (ADGR) subfamily. As to quaternary structure, heterodimer of 2 chains generated by proteolytic processing; the large extracellular N-terminal fragment and the membrane-bound C-terminal fragment predominantly remain associated and non-covalently linked. Autoproteolytically processed at the GPS region of the GAIN-B domain; this cleavage modulates receptor activity. As to expression, ubiquitously expressed. In neurons, specifically localizes to dendritic domains of CA1 pyramidal neurons in the S. lacunosummoleculare.

The protein localises to the postsynaptic cell membrane. With respect to regulation, forms a heterodimer of 2 chains generated by proteolytic processing that remain associated through non-covalent interactions mediated by the GAIN-B domain. In the inactivated receptor, the Stachel sequence (also named stalk) is embedded in the GAIN-B domain, where it adopts a beta-strand conformation. On activation, the Stachel moves into the 7 transmembrane region and adopts a twisted hook-shaped configuration that forms contacts within the receptor, leading to coupling of a G-alpha protein, which activates signaling. The cleaved GAIN-B and N-terminal domains can then dissociate from the rest of the receptor. Orphan adhesion G-protein coupled receptor (aGPCR), which mediates synapse specificity. Ligand binding causes a conformation change that triggers signaling via guanine nucleotide-binding proteins (G proteins) and modulates the activity of downstream effectors. Following G-protein coupled receptor activation, associates with cell adhesion molecules that are expressed at the surface of adjacent cells to direct synapse specificity. Specifically mediates the establishment of perforant-path synapses on CA1-region pyramidal neurons in the hippocampus. Localizes to postsynaptic spines in excitatory synapses in the S.lacunosum-moleculare and interacts with presynaptic cell adhesion molecules, such as teneurins, promoting synapse formation. This Mus musculus (Mouse) protein is Adhesion G protein-coupled receptor L2.